Consider the following 161-residue polypeptide: Fatty acid-binding protein homolog 2 (161 aa).

Residues 1–19 form the signal peptide; sequence MSSKFLILLAFCGATLVAA.

This sequence belongs to the calycin superfamily. Fatty-acid binding protein (FABP) family.

The protein resides in the secreted. Functionally, may play a role in sequestering potentially toxic fatty acids and their peroxidation products, or it may be involved in the maintenance of the impermeable lipid layer of the eggshell. This is Fatty acid-binding protein homolog 2 (lbp-2) from Caenorhabditis elegans.